The following is a 479-amino-acid chain: Chromosomal replication initiator protein DnaA (479 aa).

The tract at residues 1–71 (MNLTQIWKAT…RNALARVVGY (71 aa)) is domain I, interacts with DnaA modulators. Residues 71–138 (YPVQVQVLIA…LDLASAMRSG (68 aa)) form a domain II region. Over residues 86 to 99 (TEPSPSLTLSNGSR) the composition is skewed to polar residues. Residues 86 to 106 (TEPSPSLTLSNGSRLMSDPEP) form a disordered region. Positions 139–355 (MLNPRYTFSS…GSLNRVAAYA (217 aa)) are domain III, AAA+ region. ATP contacts are provided by glycine 183, glycine 185, lysine 186, and threonine 187. The segment at 356–479 (ELNRAPITIE…IRERIQMLRG (124 aa)) is domain IV, binds dsDNA.

Belongs to the DnaA family. Oligomerizes as a right-handed, spiral filament on DNA at oriC.

Its subcellular location is the cytoplasm. In terms of biological role, plays an essential role in the initiation and regulation of chromosomal replication. ATP-DnaA binds to the origin of replication (oriC) to initiate formation of the DNA replication initiation complex once per cell cycle. Binds the DnaA box (a 9 base pair repeat at the origin) and separates the double-stranded (ds)DNA. Forms a right-handed helical filament on oriC DNA; dsDNA binds to the exterior of the filament while single-stranded (ss)DNA is stabiized in the filament's interior. The ATP-DnaA-oriC complex binds and stabilizes one strand of the AT-rich DNA unwinding element (DUE), permitting loading of DNA polymerase. After initiation quickly degrades to an ADP-DnaA complex that is not apt for DNA replication. Binds acidic phospholipids. The chain is Chromosomal replication initiator protein DnaA from Chloroflexus aurantiacus (strain ATCC 29366 / DSM 635 / J-10-fl).